The chain runs to 67 residues: Epsilon-conotoxin TxVA (67 aa).

A signal peptide spans 1-19 (MRCFPVFIILLLLIASAPC). Residues 20–50 (FDARTKTDDDVPLSSLRDNLKRTIRTRLNIR) constitute a propeptide that is removed on maturation. 4-carboxyglutamate is present on residues Glu51 and Glu54. 2 disulfides stabilise this stretch: Cys52–Cys58 and Cys53–Cys59. Trp57 bears the 6'-bromotryptophan mark. The O-linked (GalNAc...) threonine glycan is linked to Thr60. Pro63 carries the post-translational modification 4-hydroxyproline. A propeptide spanning residues 64-67 (LTGR) is cleaved from the precursor.

Post-translationally, O-glycan consists of the disaccharide Gal-GalNAc. As to expression, expressed by the venom duct.

The protein localises to the secreted. Epsilon-conotoxins act at presynaptic membranes, blocking the calcium channels or G protein-coupled receptors. Causes hyperactivity upon intracranial injection into mice. Causes dorsal fins drooping in fish. This is Epsilon-conotoxin TxVA from Conus textile (Cloth-of-gold cone).